The sequence spans 317 residues: Melanocyte-stimulating hormone receptor (317 aa).

The Extracellular segment spans residues 1-37 (MPMQGAQKRLLGSLNSTPTATPNLGLAANHTGAPCLE). A glycan (N-linked (GlcNAc...) asparagine) is linked at Asn29. The chain crosses the membrane as a helical span at residues 38-63 (VSIPDGLFLSLGLVSLVENVLVVAAI). At 64–72 (AKNRNLHSP) the chain is on the cytoplasmic side. The helical transmembrane segment at 73 to 93 (MYCFICCLALSDLLVSSSNML) threads the bilayer. At 94–118 (ETAVILLLEAGALATRASVVQQLQN) the chain is on the extracellular side. Residues 119–140 (TIDVLTCSSMLCSLCFLGAIAV) traverse the membrane as a helical segment. The Cytoplasmic portion of the chain corresponds to 141-163 (DRHVSIFYALRYHSIMTLARARR). The helical transmembrane segment at 164–183 (AIAAIWVASVLSSTLFIAYC) threads the bilayer. The Extracellular portion of the chain corresponds to 184–191 (DHAXVLLC). Residues 192–211 (LVVFFLAMLVLMAVLYVHML) form a helical membrane-spanning segment. At 212–240 (ARACQHAQGITRLHQRQPPAHQGFGFRGA) the chain is on the cytoplasmic side. A helical transmembrane segment spans residues 241-266 (ATLTILLGIFFLCWGPFFLHLTLVVL). At 267–279 (CPQHLTCSCIFKN) the chain is on the extracellular side. Residues 280 to 300 (FKVFLTLIICSTIIDPLIYAF) traverse the membrane as a helical segment. The Cytoplasmic portion of the chain corresponds to 301 to 317 (RSQELRRTLKELLLCSW). The S-palmitoyl cysteine moiety is linked to residue Cys315.

Belongs to the G-protein coupled receptor 1 family. In terms of assembly, interacts with MGRN1, but does not undergo MGRN1-mediated ubiquitination; this interaction competes with GNAS-binding and thus inhibits agonist-induced cAMP production. Interacts with OPN3; the interaction results in a decrease in MC1R-mediated cAMP signaling and ultimately a decrease in melanin production in melanocytes.

It is found in the cell membrane. Its function is as follows. Receptor for MSH (alpha, beta and gamma) and ACTH. The activity of this receptor is mediated by G proteins which activate adenylate cyclase. Mediates melanogenesis, the production of eumelanin (black/brown) and phaeomelanin (red/yellow), via regulation of cAMP signaling in melanocytes. The chain is Melanocyte-stimulating hormone receptor (MC1R) from Ateles paniscus (Black spider monkey).